The primary structure comprises 1022 residues: Protein translocase subunit SECA1, chloroplastic (1022 aa).

Residues Met-1–Ala-72 constitute a chloroplast transit peptide. N-acetylserine is present on Ser-73. Position 176–183 (Met-176–Thr-183) interacts with ATP. Residues Lys-985–Ala-1022 form a disordered region. The span at Asn-993–Asn-1002 shows a compositional bias: polar residues.

It belongs to the SecA family. In terms of assembly, part of the Sec protein translocation apparatus. Interacts probably with SCY1. Expressed in green tissues, including cotyledons, rosette and cauline leaves, and sepals. Also detected at the base and the tip of the trichome.

It localises to the plastid. The protein resides in the chloroplast stroma. Its subcellular location is the chloroplast thylakoid membrane. The catalysed reaction is ATP + H2O + chloroplast-proteinSide 1 = ADP + phosphate + chloroplast-proteinSide 2.. Has a central role in coupling the hydrolysis of ATP to the transfer of proteins across the thylakoid membrane. Involved in photosynthetic acclimation and required for chloroplast biogenesis. This Arabidopsis thaliana (Mouse-ear cress) protein is Protein translocase subunit SECA1, chloroplastic.